Reading from the N-terminus, the 169-residue chain is Peptide deformylase (169 aa).

Fe cation contacts are provided by Cys91 and His133. Glu134 is an active-site residue. His137 contributes to the Fe cation binding site.

Belongs to the polypeptide deformylase family. Fe(2+) serves as cofactor.

It catalyses the reaction N-terminal N-formyl-L-methionyl-[peptide] + H2O = N-terminal L-methionyl-[peptide] + formate. Its function is as follows. Removes the formyl group from the N-terminal Met of newly synthesized proteins. Requires at least a dipeptide for an efficient rate of reaction. N-terminal L-methionine is a prerequisite for activity but the enzyme has broad specificity at other positions. The chain is Peptide deformylase from Pectobacterium atrosepticum (strain SCRI 1043 / ATCC BAA-672) (Erwinia carotovora subsp. atroseptica).